The following is a 436-amino-acid chain: MEHLDVGPLKAARGTVKLPGSKSISNRVLLLAALAEGETVVRDLLDSDDTRVMLAALDTLGVRCEPLGTANAYRVTGTGGRFPAKSADLFMGNAGTAIRPLTAALALQGGEYTLHGVPRMHERPIGDLVDGLRQVGARIDYTGNEGFPPLAIRAASIRIDAPIRVRGDVSSQFLTALLMALPLVEGSGRPVTIEVVGELISKPYIEITLNLMARFGVQVERNGWASFSVPTGVAYRAPGEIFVEGDASSASYFLAAGALGGGPVRVEGVGMSSIQGDVRFADALNRMGANVMAGDNWIEVRGVERDDGKLHALELDCNHIPDAAMTLAVAALFADGTTTLTNIGSWRVKETDRLTAMATELRKLGAAVEEGTDYIRVTPPSHWTAPAGGIDTYDDHRMAMAFSLAAFGPVPVRINDPRCVAKTFPEYFTAFGGIAA.

3-phosphoshikimate-binding residues include K22, S23, and R27. K22 is a binding site for phosphoenolpyruvate. Positions 95 and 123 each coordinate phosphoenolpyruvate. Residues S170, S171, Q172, S201, D322, and K349 each coordinate 3-phosphoshikimate. Position 172 (Q172) interacts with phosphoenolpyruvate. The active-site Proton acceptor is the D322. R353, R397, and K422 together coordinate phosphoenolpyruvate.

Belongs to the EPSP synthase family. As to quaternary structure, monomer.

It is found in the cytoplasm. It catalyses the reaction 3-phosphoshikimate + phosphoenolpyruvate = 5-O-(1-carboxyvinyl)-3-phosphoshikimate + phosphate. Its pathway is metabolic intermediate biosynthesis; chorismate biosynthesis; chorismate from D-erythrose 4-phosphate and phosphoenolpyruvate: step 6/7. In terms of biological role, catalyzes the transfer of the enolpyruvyl moiety of phosphoenolpyruvate (PEP) to the 5-hydroxyl of shikimate-3-phosphate (S3P) to produce enolpyruvyl shikimate-3-phosphate and inorganic phosphate. The sequence is that of 3-phosphoshikimate 1-carboxyvinyltransferase from Ralstonia nicotianae (strain ATCC BAA-1114 / GMI1000) (Ralstonia solanacearum).